We begin with the raw amino-acid sequence, 149 residues long: Arginine repressor (149 aa).

This sequence belongs to the ArgR family.

The protein localises to the cytoplasm. It functions in the pathway amino-acid biosynthesis; L-arginine biosynthesis [regulation]. Regulates arginine biosynthesis genes. The polypeptide is Arginine repressor (Chlorobium phaeobacteroides (strain DSM 266 / SMG 266 / 2430)).